Here is a 417-residue protein sequence, read N- to C-terminus: NADH-quinone oxidoreductase subunit D (417 aa).

This sequence belongs to the complex I 49 kDa subunit family. In terms of assembly, NDH-1 is composed of 14 different subunits. Subunits NuoB, C, D, E, F, and G constitute the peripheral sector of the complex.

It localises to the cell inner membrane. It catalyses the reaction a quinone + NADH + 5 H(+)(in) = a quinol + NAD(+) + 4 H(+)(out). Functionally, NDH-1 shuttles electrons from NADH, via FMN and iron-sulfur (Fe-S) centers, to quinones in the respiratory chain. The immediate electron acceptor for the enzyme in this species is believed to be ubiquinone. Couples the redox reaction to proton translocation (for every two electrons transferred, four hydrogen ions are translocated across the cytoplasmic membrane), and thus conserves the redox energy in a proton gradient. The sequence is that of NADH-quinone oxidoreductase subunit D from Acidithiobacillus ferrooxidans (strain ATCC 53993 / BNL-5-31) (Leptospirillum ferrooxidans (ATCC 53993)).